A 347-amino-acid polypeptide reads, in one-letter code: NADH-ubiquinone oxidoreductase chain 2 (347 aa).

Transmembrane regions (helical) follow at residues 3 to 23 (PIIL…VMIS), 25 to 45 (HWLL…PIMM), 67 to 87 (SMLL…WTVM), 96 to 116 (MLMT…FWVP), 122 to 142 (IPLS…MSVL), 145 to 165 (ILPS…ITIG), 178 to 198 (IMAY…LYNP), 200 to 220 (MTLL…TLFM), 237 to 257 (APIM…LPPL), 274 to 294 (DSII…YFYM), and 325 to 345 (LLPT…ILSI).

The protein belongs to the complex I subunit 2 family. As to quaternary structure, core subunit of respiratory chain NADH dehydrogenase (Complex I) which is composed of 45 different subunits. Interacts with TMEM242.

Its subcellular location is the mitochondrion inner membrane. It catalyses the reaction a ubiquinone + NADH + 5 H(+)(in) = a ubiquinol + NAD(+) + 4 H(+)(out). Core subunit of the mitochondrial membrane respiratory chain NADH dehydrogenase (Complex I) which catalyzes electron transfer from NADH through the respiratory chain, using ubiquinone as an electron acceptor. Essential for the catalytic activity and assembly of complex I. The polypeptide is NADH-ubiquinone oxidoreductase chain 2 (Ovis aries (Sheep)).